The following is a 210-amino-acid chain: Imidazoleglycerol-phosphate dehydratase (210 aa).

Belongs to the imidazoleglycerol-phosphate dehydratase family.

It is found in the cytoplasm. It catalyses the reaction D-erythro-1-(imidazol-4-yl)glycerol 3-phosphate = 3-(imidazol-4-yl)-2-oxopropyl phosphate + H2O. The protein operates within amino-acid biosynthesis; L-histidine biosynthesis; L-histidine from 5-phospho-alpha-D-ribose 1-diphosphate: step 6/9. This Mycobacterium marinum (strain ATCC BAA-535 / M) protein is Imidazoleglycerol-phosphate dehydratase.